The primary structure comprises 163 residues: Neurotrophin-3 (163 aa).

The N-terminal stretch at isoleucine 1–serine 3 is a signal peptide. A propeptide spanning residues threonine 4–arginine 119 is cleaved from the precursor. Asparagine 112 carries N-linked (GlcNAc...) asparagine glycosylation.

It belongs to the NGF-beta family.

Its subcellular location is the secreted. Functionally, seems to promote the survival of visceral and proprioceptive sensory neurons. This Eryx colubrinus colubrinus protein is Neurotrophin-3 (NTF3).